A 134-amino-acid polypeptide reads, in one-letter code: Fluoride-specific ion channel FluC 2 (134 aa).

4 consecutive transmembrane segments (helical) span residues 8-28 (IVAI…LNTW), 40-60 (IENI…LVIV), 69-89 (LGVG…DSVL), and 99-119 (LIYV…GYLL). Residues glycine 75 and threonine 78 each contribute to the Na(+) site.

The protein belongs to the fluoride channel Fluc/FEX (TC 1.A.43) family.

The protein resides in the cell membrane. It carries out the reaction fluoride(in) = fluoride(out). Its activity is regulated as follows. Na(+) is not transported, but it plays an essential structural role and its presence is essential for fluoride channel function. In terms of biological role, fluoride-specific ion channel. Important for reducing fluoride concentration in the cell, thus reducing its toxicity. In Halalkalibacterium halodurans (strain ATCC BAA-125 / DSM 18197 / FERM 7344 / JCM 9153 / C-125) (Bacillus halodurans), this protein is Fluoride-specific ion channel FluC 2.